Reading from the N-terminus, the 341-residue chain is UPF0283 membrane protein VV2076 (341 aa).

4 consecutive transmembrane segments (helical) span residues 64 to 84 (LAGG…VDSV), 93 to 113 (WLTL…LGAM), 207 to 227 (ESAA…LVAW), and 255 to 275 (LVLA…AGMD).

The protein belongs to the UPF0283 family.

It is found in the cell inner membrane. This chain is UPF0283 membrane protein VV2076, found in Vibrio vulnificus (strain YJ016).